Here is a 78-residue protein sequence, read N- to C-terminus: Large ribosomal subunit protein bL28 (78 aa).

The protein belongs to the bacterial ribosomal protein bL28 family.

This chain is Large ribosomal subunit protein bL28, found in Alcanivorax borkumensis (strain ATCC 700651 / DSM 11573 / NCIMB 13689 / SK2).